The following is a 532-amino-acid chain: Putative cysteine desulfurase PbSufS (532 aa).

The first 18 residues, methionine 1–serine 18, serve as a signal peptide directing secretion. Lysine 286 carries the post-translational modification N6-(pyridoxal phosphate)lysine. The Cysteine persulfide intermediate role is filled by cysteine 480.

It belongs to the class-V pyridoxal-phosphate-dependent aminotransferase family. Csd subfamily. Monomer. Interacts with SufE; interaction enhances cysteine desulfurase activity of SufS. The cofactor is pyridoxal 5'-phosphate.

Its subcellular location is the plastid. It is found in the apicoplast. The catalysed reaction is (sulfur carrier)-H + L-cysteine = (sulfur carrier)-SH + L-alanine. Its pathway is cofactor biosynthesis; iron-sulfur cluster biosynthesis. In terms of biological role, catalyzes sulfur activation and mobilization in sulfur mobilization (SUF) pathway for iron-sulfur (Fe-S) cluster biogenesis. Active when in complex with a partner protein SufE. Required for apicoplast maintenance. Plays a role in the development of sporozoites in oocysts in mosquitoes. The protein is Putative cysteine desulfurase PbSufS of Plasmodium berghei (strain Anka).